The sequence spans 544 residues: Chaperonin GroEL (544 aa).

ATP contacts are provided by residues 29–32 (TLGP), Lys-50, 86–90 (DGTTT), Gly-414, and Asp-494.

This sequence belongs to the chaperonin (HSP60) family. As to quaternary structure, forms a cylinder of 14 subunits composed of two heptameric rings stacked back-to-back. Interacts with the co-chaperonin GroES.

The protein localises to the cytoplasm. It carries out the reaction ATP + H2O + a folded polypeptide = ADP + phosphate + an unfolded polypeptide.. Its function is as follows. Together with its co-chaperonin GroES, plays an essential role in assisting protein folding. The GroEL-GroES system forms a nano-cage that allows encapsulation of the non-native substrate proteins and provides a physical environment optimized to promote and accelerate protein folding. This is Chaperonin GroEL from Amoebophilus asiaticus (strain 5a2).